Consider the following 671-residue polypeptide: Transcription factor xilB (671 aa).

Positions 11–46 (CHSCYTRKQKASESDSICDRQYPCNHCTRRRRPEEC) form a DNA-binding region, zn(2)-C6 fungal-type. The segment at 48–90 (YGPPPVKVPSCPPVPADQSETQPRPVESARPTRETPVDDSEAH) is disordered. A compositionally biased stretch (pro residues) spans 49 to 62 (GPPPVKVPSCPPVP). Over residues 77–90 (RPTRETPVDDSEAH) the composition is skewed to basic and acidic residues. A fungal transcription factor domain region spans residues 148 to 593 (PERQIIDFLV…ATLLFARSVQ (446 aa)). The interval 629–650 (WPSLEAGDPYSMPDNFPSMAQD) is disordered.

The protein resides in the nucleus. In terms of biological role, transcription factor; part of the gene cluster that mediates the biosynthesis of the 6-methyl-2-pyrone derivative xylariolide D. May play a role in the regulation of the expression of the highly reducing polyketide synthase xilA and the cytochroe P450 monooxygenase xilC. This chain is Transcription factor xilB, found in Penicillium rubens (strain ATCC 28089 / DSM 1075 / NRRL 1951 / Wisconsin 54-1255) (Penicillium chrysogenum).